Here is a 409-residue protein sequence, read N- to C-terminus: Serine/threonine transporter SstT (409 aa).

9 consecutive transmembrane segments (helical) span residues 24–44, 48–68, 82–102, 142–162, 194–214, 218–238, 292–312, 319–339, and 365–385; these read LALG…AGLF, FVGA…AATI, IIVL…IAGM, AIAN…GAAL, LGIF…ALAG, LLAV…PAIV, IPLG…VLAM, GIQV…VSAC, and VAMQ…SAET.

The protein belongs to the dicarboxylate/amino acid:cation symporter (DAACS) (TC 2.A.23) family.

It localises to the cell inner membrane. The catalysed reaction is L-serine(in) + Na(+)(in) = L-serine(out) + Na(+)(out). The enzyme catalyses L-threonine(in) + Na(+)(in) = L-threonine(out) + Na(+)(out). Involved in the import of serine and threonine into the cell, with the concomitant import of sodium (symport system). This chain is Serine/threonine transporter SstT, found in Neisseria meningitidis serogroup C / serotype 2a (strain ATCC 700532 / DSM 15464 / FAM18).